Here is a 40-residue protein sequence, read N- to C-terminus: Photosystem II reaction center protein J (40 aa).

The chain crosses the membrane as a helical span at residues 8–28 (IPLWLIGTVTGIIVIGLIGIF).

It belongs to the PsbJ family. In terms of assembly, PSII is composed of 1 copy each of membrane proteins PsbA, PsbB, PsbC, PsbD, PsbE, PsbF, PsbH, PsbI, PsbJ, PsbK, PsbL, PsbM, PsbT, PsbX, PsbY, PsbZ, Psb30/Ycf12, at least 3 peripheral proteins of the oxygen-evolving complex and a large number of cofactors. It forms dimeric complexes.

It is found in the plastid. The protein localises to the chloroplast thylakoid membrane. One of the components of the core complex of photosystem II (PSII). PSII is a light-driven water:plastoquinone oxidoreductase that uses light energy to abstract electrons from H(2)O, generating O(2) and a proton gradient subsequently used for ATP formation. It consists of a core antenna complex that captures photons, and an electron transfer chain that converts photonic excitation into a charge separation. In Piper cenocladum (Ant piper), this protein is Photosystem II reaction center protein J.